Reading from the N-terminus, the 727-residue chain is NADH-ubiquinone oxidoreductase 75 kDa subunit, mitochondrial (727 aa).

The transit peptide at Met-1 to Thr-23 directs the protein to the mitochondrion. The 2Fe-2S ferredoxin-type domain occupies Asn-30–Lys-108. [2Fe-2S] cluster contacts are provided by Cys-64, Cys-75, and Cys-78. Residue Lys-84 is modified to N6-acetyllysine. A [2Fe-2S] cluster-binding site is contributed by Cys-92. Residues Lys-108 to Gly-147 form the 4Fe-4S His(Cys)3-ligated-type domain. The [4Fe-4S] cluster site is built by His-124, Cys-128, Cys-131, Cys-137, Cys-176, Cys-179, Cys-182, and Cys-226. The region spanning Thr-245–Arg-301 is the 4Fe-4S Mo/W bis-MGD-type domain. N6-acetyllysine is present on residues Lys-467, Lys-499, and Lys-709.

This sequence belongs to the complex I 75 kDa subunit family. Core subunit of respiratory chain NADH dehydrogenase (Complex I) which is composed of 45 different subunits. This is the largest subunit of complex I and it is a component of the iron-sulfur (IP) fragment of the enzyme. Complex I associates with ubiquinol-cytochrome reductase complex (Complex III) to form supercomplexes. Interacts with MDM2 and AKAP1. It depends on [2Fe-2S] cluster as a cofactor. The cofactor is [4Fe-4S] cluster.

The protein localises to the mitochondrion inner membrane. The catalysed reaction is a ubiquinone + NADH + 5 H(+)(in) = a ubiquinol + NAD(+) + 4 H(+)(out). Its function is as follows. Core subunit of the mitochondrial membrane respiratory chain NADH dehydrogenase (Complex I) which catalyzes electron transfer from NADH through the respiratory chain, using ubiquinone as an electron acceptor. Essential for catalysing the entry and efficient transfer of electrons within complex I. Plays a key role in the assembly and stability of complex I and participates in the association of complex I with ubiquinol-cytochrome reductase complex (Complex III) to form supercomplexes. The protein is NADH-ubiquinone oxidoreductase 75 kDa subunit, mitochondrial (NDUFS1) of Gorilla gorilla gorilla (Western lowland gorilla).